The sequence spans 578 residues: Protein LIKE EARLY STARVATION, chloroplastic (578 aa).

A chloroplast-targeting transit peptide spans methionine 1–arginine 56. Disordered stretches follow at residues asparagine 146–valine 166 and serine 187–glutamine 206.

The protein belongs to the ESV1 family. In terms of tissue distribution, expressed ubiquitously.

Its subcellular location is the plastid. It is found in the chloroplast stroma. Functionally, binds preferentially to highly ordered alpha-glucans, such as starch and crystalline maltodextrins. Involved in the organization of the starch granule matrix, thus influencing starch turnover by modulating the accessibility of starch polymers to modifying and degrading enzymes involved in phosphorylation, hydrolyzes and synthesis, including starch synthases (SSI and SSIII), starch phosphorylases (PHS1), isoamylase, beta-amylase, glucan water dikinase (GWD) and phosphoglucan water dikinase (PWD). The polypeptide is Protein LIKE EARLY STARVATION, chloroplastic (Arabidopsis thaliana (Mouse-ear cress)).